Consider the following 472-residue polypeptide: Glycogen synthase (472 aa).

Lysine 16 contacts ADP-alpha-D-glucose.

The protein belongs to the glycosyltransferase 1 family. Bacterial/plant glycogen synthase subfamily.

The catalysed reaction is [(1-&gt;4)-alpha-D-glucosyl](n) + ADP-alpha-D-glucose = [(1-&gt;4)-alpha-D-glucosyl](n+1) + ADP + H(+). Its pathway is glycan biosynthesis; glycogen biosynthesis. Functionally, synthesizes alpha-1,4-glucan chains using ADP-glucose. The polypeptide is Glycogen synthase (Jannaschia sp. (strain CCS1)).